The sequence spans 161 residues: Interleukin-17F (161 aa).

An N-terminal signal peptide occupies residues 1–28 (MKCTRETAMVKSLLLLMLGLAILREVAA). Asn-83 carries N-linked (GlcNAc...) asparagine glycosylation. 2 cysteine pairs are disulfide-bonded: Cys-100/Cys-150 and Cys-105/Cys-152.

This sequence belongs to the IL-17 family. Homodimer; disulfide-linked. Heterodimer with IL17A (IL17A-IL17F). Forms complexes with IL17RA and IL17RC receptors with 2:1 binding stoichiometry: two receptor chains for one interleukin molecule. IL17F homodimer forms predominantly complexes with IL17RC homodimer, whereas IL17A-IL17F favors complexes with IL17RA-IL17RC. IL17RA and IL17RC chains cannot distinguish between IL17A and IL17F molecules, potentially enabling the formation of topologically distinct complexes. In terms of tissue distribution, expressed by T-helper 17 cells (Th17) (at protein level). The expression pattern reflects the differentiation state. In fully differentiated Th17 cells, IL17A-IL17F heterodimers are produced at higher levels than IL17A-IL17A and IL17F-IL17F dimers. Dominantly secreted in intestine. Expressed by resident cells of the lamina propria, both epithelial cells and immune cell subsets including natural killer cells, dendritic cells, macrophages and various T and B cell subsets. Expressed by epithelial cells and innate immune cells in the colon. Expressed in group 3 innate lymphoid cells.

Its subcellular location is the secreted. Its function is as follows. Effector cytokine of innate and adaptive immune system involved in antimicrobial host defense and maintenance of tissue integrity. IL17A-IL17F signals via IL17RA-IL17RC heterodimeric receptor complex, triggering homotypic interaction of IL17RA and IL17RC chains with TRAF3IP2 adapter through SEFIR domains. This leads to downstream TRAF6-mediated activation of NF-kappa-B and MAPkinase pathways ultimately resulting in transcriptional activation of cytokines, chemokines, antimicrobial peptides and matrix metalloproteinases, with potential strong immune inflammation. IL17A-IL17F is primarily involved in host defense against extracellular bacteria and fungi by inducing neutrophilic inflammation. As signature effector cytokine of T-helper 17 cells (Th17), primarily induces neutrophil activation and recruitment at infection and inflammatory sites. Stimulates the production of antimicrobial beta-defensins DEFB1, DEFB103A, and DEFB104A by mucosal epithelial cells, limiting the entry of microbes through the epithelial barriers. IL17F homodimer can signal via IL17RC homodimeric receptor complex, triggering downstream activation of TRAF6 and NF-kappa-B signaling pathway. Via IL17RC induces transcriptional activation of IL33, a potent cytokine that stimulates group 2 innate lymphoid cells and adaptive T-helper 2 cells involved in pulmonary allergic response to fungi. Likely via IL17RC, promotes sympathetic innervation of peripheral organs by coordinating the communication between gamma-delta T cells and parenchymal cells. Stimulates sympathetic innervation of thermogenic adipose tissue by driving TGFB1 expression. Regulates the composition of intestinal microbiota and immune tolerance by inducing antimicrobial proteins that specifically control the growth of commensal Firmicutes and Bacteroidetes. This Mus musculus (Mouse) protein is Interleukin-17F (Il17f).